The chain runs to 790 residues: Phenylalanine--tRNA ligase beta subunit (790 aa).

One can recognise a tRNA-binding domain in the interval 39–154 (PDSLNTVVTG…ENTPLGESAC (116 aa)). Residues 404 to 483 (SDPLSLNIRP…FVQKTQKILP (80 aa)) enclose the B5 domain. 4 residues coordinate Mg(2+): aspartate 457, aspartate 463, glutamate 466, and glutamate 467. One can recognise an FDX-ACB domain in the interval 694 to 790 (PIYPSSSRDI…NLANIGKGNS (97 aa)).

Belongs to the phenylalanyl-tRNA synthetase beta subunit family. Type 1 subfamily. In terms of assembly, tetramer of two alpha and two beta subunits. Mg(2+) serves as cofactor.

It localises to the cytoplasm. The enzyme catalyses tRNA(Phe) + L-phenylalanine + ATP = L-phenylalanyl-tRNA(Phe) + AMP + diphosphate + H(+). In Chlamydia muridarum (strain MoPn / Nigg), this protein is Phenylalanine--tRNA ligase beta subunit (pheT).